Here is a 168-residue protein sequence, read N- to C-terminus: Photosystem I assembly protein Ycf3 (168 aa).

3 TPR repeats span residues 35-68, 72-105, and 120-153; these read AFTYYRDGISAQSEGNYAEALQNYYEAMRLEIDP, SYILYNIGLIHTSNGEHTKALEYYFRALERNSFL, and GEQAIRQGDSEIAEAWFDQAAEYWKQAIALTPGN.

It belongs to the Ycf3 family.

The protein localises to the plastid. It is found in the chloroplast thylakoid membrane. Functionally, essential for the assembly of the photosystem I (PSI) complex. May act as a chaperone-like factor to guide the assembly of the PSI subunits. In Jasminum nudiflorum (Winter jasmine), this protein is Photosystem I assembly protein Ycf3.